The primary structure comprises 250 residues: Triosephosphate isomerase (250 aa).

Asn9–Lys11 is a substrate binding site. Residue His94 is the Electrophile of the active site. Catalysis depends on Glu166, which acts as the Proton acceptor. Substrate-binding positions include Gly172, Ser212, and Gly233–Gly234.

It belongs to the triosephosphate isomerase family. Homodimer.

The protein localises to the cytoplasm. It catalyses the reaction D-glyceraldehyde 3-phosphate = dihydroxyacetone phosphate. Its pathway is carbohydrate biosynthesis; gluconeogenesis. The protein operates within carbohydrate degradation; glycolysis; D-glyceraldehyde 3-phosphate from glycerone phosphate: step 1/1. Its function is as follows. Involved in the gluconeogenesis. Catalyzes stereospecifically the conversion of dihydroxyacetone phosphate (DHAP) to D-glyceraldehyde-3-phosphate (G3P). The chain is Triosephosphate isomerase from Clostridium novyi (strain NT).